The chain runs to 69 residues: Guanine nucleotide-binding protein G(I)/G(S)/G(O) subunit gamma-T2 (69 aa).

Position 66 is a cysteine methyl ester (cysteine 66). Residue cysteine 66 is the site of S-farnesyl cysteine attachment. Residues 67–69 (IIS) constitute a propeptide, removed in mature form.

It belongs to the G protein gamma family. As to quaternary structure, g proteins are composed of 3 units, alpha, beta and gamma.

The protein resides in the cell membrane. In terms of biological role, guanine nucleotide-binding proteins (G proteins) are involved as a modulator or transducer in various transmembrane signaling systems. The beta and gamma chains are required for the GTPase activity, for replacement of GDP by GTP, and for G protein-effector interaction. The protein is Guanine nucleotide-binding protein G(I)/G(S)/G(O) subunit gamma-T2 (GNGT2) of Bos taurus (Bovine).